A 259-amino-acid polypeptide reads, in one-letter code: HTH-type quorum sensing-dependent transcriptional regulator VjbR (259 aa).

Residues 76 to 179 are C12-HSL binding; the sequence is KNYFAIDPVF…AGIIHGTVCG (104 aa). Residues 183 to 248 form the HTH luxR-type domain; the sequence is ANSVASLLTP…SAVATALSLG (66 aa). A DNA-binding region (H-T-H motif) is located at residues 207–226; that stretch reads DGEIAEILSIARWTVVTYLQ.

Transcriptional regulator involved in the global control of Brucella gene expression. Mediates the effects of the quorum sensing autoinducer C12-HSL (N-dodecanoyl-homoserine lactone) on a large and diverse number of genes. The polypeptide is HTH-type quorum sensing-dependent transcriptional regulator VjbR (vjbR) (Brucella suis biovar 1 (strain 1330)).